The primary structure comprises 392 residues: Anhydro-N-acetylmuramic acid kinase (392 aa).

Residue 22 to 29 (GTSMDGVD) coordinates ATP.

This sequence belongs to the anhydro-N-acetylmuramic acid kinase family.

The catalysed reaction is 1,6-anhydro-N-acetyl-beta-muramate + ATP + H2O = N-acetyl-D-muramate 6-phosphate + ADP + H(+). It functions in the pathway amino-sugar metabolism; 1,6-anhydro-N-acetylmuramate degradation. Its pathway is cell wall biogenesis; peptidoglycan recycling. Functionally, catalyzes the specific phosphorylation of 1,6-anhydro-N-acetylmuramic acid (anhMurNAc) with the simultaneous cleavage of the 1,6-anhydro ring, generating MurNAc-6-P. Is required for the utilization of anhMurNAc either imported from the medium or derived from its own cell wall murein, and thus plays a role in cell wall recycling. The chain is Anhydro-N-acetylmuramic acid kinase from Burkholderia pseudomallei (strain 1106a).